The following is a 1197-amino-acid chain: DNA-directed RNA polymerase subunit beta (1197 aa).

A compositionally biased stretch (polar residues) spans 581-597 (QANSPLNDDGSFTNPTV). Disordered stretches follow at residues 581-603 (QANS…RHGD) and 1172-1197 (EKPD…EENV).

Belongs to the RNA polymerase beta chain family. The RNAP catalytic core consists of 2 alpha, 1 beta, 1 beta' and 1 omega subunit. When a sigma factor is associated with the core the holoenzyme is formed, which can initiate transcription.

It carries out the reaction RNA(n) + a ribonucleoside 5'-triphosphate = RNA(n+1) + diphosphate. Functionally, DNA-dependent RNA polymerase catalyzes the transcription of DNA into RNA using the four ribonucleoside triphosphates as substrates. In Oenococcus oeni (strain ATCC BAA-331 / PSU-1), this protein is DNA-directed RNA polymerase subunit beta.